A 320-amino-acid polypeptide reads, in one-letter code: Ribosomal large subunit pseudouridine synthase D (320 aa).

Positions 18-90 (QRLDQIAAQL…IELEIVYEDE (73 aa)) constitute an S4 RNA-binding domain. Aspartate 138 is a catalytic residue.

The protein belongs to the pseudouridine synthase RluA family.

It is found in the cytoplasm. It catalyses the reaction uridine(1911/1915/1917) in 23S rRNA = pseudouridine(1911/1915/1917) in 23S rRNA. Functionally, responsible for synthesis of pseudouridine from uracil at positions 1911, 1915 and 1917 in 23S ribosomal RNA. This chain is Ribosomal large subunit pseudouridine synthase D (rluD), found in Pseudomonas aeruginosa (strain ATCC 15692 / DSM 22644 / CIP 104116 / JCM 14847 / LMG 12228 / 1C / PRS 101 / PAO1).